Reading from the N-terminus, the 487-residue chain is Glycogen synthase (487 aa).

Lys19 lines the ADP-alpha-D-glucose pocket.

The protein belongs to the glycosyltransferase 1 family. Bacterial/plant glycogen synthase subfamily.

It carries out the reaction [(1-&gt;4)-alpha-D-glucosyl](n) + ADP-alpha-D-glucose = [(1-&gt;4)-alpha-D-glucosyl](n+1) + ADP + H(+). The protein operates within glycan biosynthesis; glycogen biosynthesis. Its function is as follows. Synthesizes alpha-1,4-glucan chains using ADP-glucose. The sequence is that of Glycogen synthase from Moorella thermoacetica (strain ATCC 39073 / JCM 9320).